The primary structure comprises 79 residues: Acyl carrier protein (79 aa).

Residues 2–77 (SDIGERVKKI…DATKFLEKNA (76 aa)) form the Carrier domain. Position 37 is an O-(pantetheine 4'-phosphoryl)serine (Ser-37).

It belongs to the acyl carrier protein (ACP) family. 4'-phosphopantetheine is transferred from CoA to a specific serine of apo-ACP by AcpS. This modification is essential for activity because fatty acids are bound in thioester linkage to the sulfhydryl of the prosthetic group.

It localises to the cytoplasm. The protein operates within lipid metabolism; fatty acid biosynthesis. Functionally, carrier of the growing fatty acid chain in fatty acid biosynthesis. This is Acyl carrier protein from Bradyrhizobium diazoefficiens (strain JCM 10833 / BCRC 13528 / IAM 13628 / NBRC 14792 / USDA 110).